The sequence spans 541 residues: GTPase Obg (541 aa).

The Obg domain occupies 2 to 159 (PTFVDRVVLH…LDAVLELKSV (158 aa)). Residues 63–84 (HPHQRAGGGRPGQGSNRHGADG) form a disordered region. One can recognise an OBG-type G domain in the interval 160–332 (ADVALVGFPS…LALALAELVA (173 aa)). GTP-binding positions include 166 to 173 (GFPSAGKS), 191 to 195 (FTTLV), 213 to 216 (DVPG), 284 to 287 (NKVD), and 313 to 315 (STA). Mg(2+) is bound by residues S173 and T193. In terms of domain architecture, OCT spans 350-427 (PRAVDEPDFT…IGAVTFDWEP (78 aa)). The segment at 497-541 (KRLTRAQRTALSDSADDFDDGAGFSDSAAFGDSGGSGGDADGGRG) is disordered. Positions 517 to 527 (GAGFSDSAAFG) are enriched in low complexity. A compositionally biased stretch (gly residues) spans 528-541 (DSGGSGGDADGGRG).

It belongs to the TRAFAC class OBG-HflX-like GTPase superfamily. OBG GTPase family. As to quaternary structure, monomer. It depends on Mg(2+) as a cofactor.

The protein resides in the cytoplasm. Functionally, an essential GTPase which binds GTP, GDP and possibly (p)ppGpp with moderate affinity, with high nucleotide exchange rates and a fairly low GTP hydrolysis rate. Plays a role in control of the cell cycle, stress response, ribosome biogenesis and in those bacteria that undergo differentiation, in morphogenesis control. This Parafrankia sp. (strain EAN1pec) protein is GTPase Obg.